Reading from the N-terminus, the 228-residue chain is MIPKLLKHELTFPHPNDATEDGIVAWGGDLNPSRLIRAYQNGIFPWYGKNDPIIWWSPNPRLIMELDDFKLSRSLRKSMKKFEYRFDTNFINVMKNCQNIKRVKQDGTWIQDEIIEAYSVLHDMGIAHSVESYLDGELVGGLYGVAVGGLFCGESMFTLVNDASKSAYAVLINHLKIWGYDFIDAQVPTEHLKNLGAKEVSRDYFLDRLHKVNMNIINHKWELLHVNT.

It belongs to the L/F-transferase family.

It is found in the cytoplasm. It catalyses the reaction N-terminal L-lysyl-[protein] + L-leucyl-tRNA(Leu) = N-terminal L-leucyl-L-lysyl-[protein] + tRNA(Leu) + H(+). The catalysed reaction is N-terminal L-arginyl-[protein] + L-leucyl-tRNA(Leu) = N-terminal L-leucyl-L-arginyl-[protein] + tRNA(Leu) + H(+). The enzyme catalyses L-phenylalanyl-tRNA(Phe) + an N-terminal L-alpha-aminoacyl-[protein] = an N-terminal L-phenylalanyl-L-alpha-aminoacyl-[protein] + tRNA(Phe). In terms of biological role, functions in the N-end rule pathway of protein degradation where it conjugates Leu, Phe and, less efficiently, Met from aminoacyl-tRNAs to the N-termini of proteins containing an N-terminal arginine or lysine. In Sulfurimonas denitrificans (strain ATCC 33889 / DSM 1251) (Thiomicrospira denitrificans (strain ATCC 33889 / DSM 1251)), this protein is Leucyl/phenylalanyl-tRNA--protein transferase.